The sequence spans 101 residues: CLAVATA3/ESR (CLE)-related protein 18 (101 aa).

Positions 1–25 (MHLLKGGVVLIITLILFLITSSIVA) are cleaved as a signal peptide. A disordered region spans residues 37 to 58 (RQIPTGPDPLHNPPQPSPKHHH). P40 and P43 each carry hydroxyproline. Positions 42–53 (GPDPLHNPPQPS) are enriched in pro residues. P43 is a glycosylation site (O-linked (Ara...) hydroxyproline). Residue Y76 is modified to Sulfotyrosine. At P84 the chain carries Hydroxyproline.

Belongs to the CLV3/ESR signal peptide family. In terms of processing, the tyrosine sulfation is critical for the function of the peptide. The O-glycosylation (arabinosylation) of the hydroxyproline Pro-43 enhances binding affinity of the CLE18p peptide for its receptor. In terms of tissue distribution, expressed in roots, leaves, siliques and seedlings.

Its subcellular location is the secreted. It localises to the extracellular space. In terms of biological role, root growth factor that regulates the pattern of root growth and lateral root development by modulating the length and the number of cortical cells in the root apical meristem (RAM), and the anticlinal asymmetric cell divisions in lateral root initiation cells. Functionally, extracellular signal peptide that regulates cell fate. Represses root apical meristem maintenance. Root growth factor that regulates the pattern of root growth and lateral root development. Regulates the transition of protophloem cells from proliferation to differentiation, thus impinging on postembryonic growth capacity of the root meristem; this signaling pathway requires CRN and CLV2. The sequence is that of CLAVATA3/ESR (CLE)-related protein 18 from Arabidopsis thaliana (Mouse-ear cress).